A 988-amino-acid chain; its full sequence is Protein SEMI-ROLLED LEAF 2 (988 aa).

The segment at 844–865 (SVDGGLHESPITNTGSSISKTT) is disordered. Positions 853–865 (PITNTGSSISKTT) are enriched in polar residues.

In terms of tissue distribution, expressed in root tips, and in the vascular bundles of leaf blades, leaf sheaths, and roots, especially in their sclerenchymatous cells.

Its subcellular location is the nucleus. It localises to the cytoplasm. In terms of biological role, functions in regulating leaf rolling through abaxial side leaf cell differentiation. May be involved in the transdifferentiation process from mesophyll cells to sclerenchymatous cells. The sequence is that of Protein SEMI-ROLLED LEAF 2 from Oryza sativa subsp. japonica (Rice).